The following is a 288-amino-acid chain: NAD kinase (288 aa).

Aspartate 73 functions as the Proton acceptor in the catalytic mechanism. NAD(+) contacts are provided by residues 73–74 (DG), arginine 78, 144–145 (NE), aspartate 174, 185–190 (TAYSLS), and alanine 209.

The protein belongs to the NAD kinase family. A divalent metal cation serves as cofactor.

It is found in the cytoplasm. It catalyses the reaction NAD(+) + ATP = ADP + NADP(+) + H(+). Functionally, involved in the regulation of the intracellular balance of NAD and NADP, and is a key enzyme in the biosynthesis of NADP. Catalyzes specifically the phosphorylation on 2'-hydroxyl of the adenosine moiety of NAD to yield NADP. In Porphyromonas gingivalis (strain ATCC 33277 / DSM 20709 / CIP 103683 / JCM 12257 / NCTC 11834 / 2561), this protein is NAD kinase.